The sequence spans 286 residues: Beta-lactamase Ohio-1 (286 aa).

The first 21 residues, 1 to 21, serve as a signal peptide directing secretion; the sequence is MRYFRLCIISLLATLPLRVHA. Ser66 acts as the Acyl-ester intermediate in catalysis. The cysteines at positions 73 and 119 are disulfide-linked. Catalysis depends on Glu164, which acts as the Proton acceptor. 230–232 contributes to the substrate binding site; sequence KTG.

It belongs to the class-A beta-lactamase family.

It carries out the reaction a beta-lactam + H2O = a substituted beta-amino acid. The protein is Beta-lactamase Ohio-1 of Enterobacter cloacae.